Here is a 145-residue protein sequence, read N- to C-terminus: Large-conductance mechanosensitive channel (145 aa).

Transmembrane regions (helical) follow at residues 14 to 34 (VIDLAIGIIIGGAFGKIVDSL) and 81 to 101 (GIFISTIVDFLIMAFVVFLMV).

The protein belongs to the MscL family. Homopentamer.

Its subcellular location is the cell inner membrane. Functionally, channel that opens in response to stretch forces in the membrane lipid bilayer. May participate in the regulation of osmotic pressure changes within the cell. The protein is Large-conductance mechanosensitive channel of Pelobacter propionicus (strain DSM 2379 / NBRC 103807 / OttBd1).